A 532-amino-acid polypeptide reads, in one-letter code: Transcriptional regulatory protein RtcR (532 aa).

The Sigma-54 factor interaction domain occupies 186-424 (IATRNPHFNR…LSASVTRMAT (239 aa)). Residues 215–222 (GPTGAGKS) and 281–290 (ANGGMLFLDE) contribute to the ATP site. The segment at residues 485-504 (KSLSAAGRQLFDVSRQGKAS) is a DNA-binding region (H-T-H motif).

Functionally, transcriptional repressor of the rtcAB genes. Interacts with sigma-54. The sequence is that of Transcriptional regulatory protein RtcR (rtcR) from Escherichia coli (strain K12).